Here is a 119-residue protein sequence, read N- to C-terminus: Large ribosomal subunit protein uL18 (119 aa).

Positions 1–22 (MGHVEKVARRHKIKTRSKARGQ) are disordered. A compositionally biased stretch (basic residues) spans 8–19 (ARRHKIKTRSKA).

It belongs to the universal ribosomal protein uL18 family. Part of the 50S ribosomal subunit; part of the 5S rRNA/L5/L18/L25 subcomplex. Contacts the 5S and 23S rRNAs.

Functionally, this is one of the proteins that bind and probably mediate the attachment of the 5S RNA into the large ribosomal subunit, where it forms part of the central protuberance. In Chlorobium phaeobacteroides (strain BS1), this protein is Large ribosomal subunit protein uL18.